We begin with the raw amino-acid sequence, 343 residues long: uncharacterized protein (343 aa).

This is an uncharacterized protein from Methanocaldococcus jannaschii (strain ATCC 43067 / DSM 2661 / JAL-1 / JCM 10045 / NBRC 100440) (Methanococcus jannaschii).